Reading from the N-terminus, the 762-residue chain is Phosphoribosylformylglycinamidine synthase subunit PurL (762 aa).

Histidine 58 is a catalytic residue. Tyrosine 61 and arginine 105 together coordinate ATP. Glutamate 107 is a binding site for Mg(2+). Substrate-binding positions include 108-111 (SHNH) and arginine 130. Histidine 109 (proton acceptor) is an active-site residue. Aspartate 131 contributes to the Mg(2+) binding site. Glutamine 255 serves as a coordination point for substrate. Aspartate 283 contacts Mg(2+). Residue 327 to 329 (ESQ) participates in substrate binding. Residues asparagine 513 and glycine 550 each contribute to the ATP site. Asparagine 551 is a binding site for Mg(2+). Position 553 (serine 553) interacts with substrate.

The protein belongs to the FGAMS family. As to quaternary structure, monomer. Part of the FGAM synthase complex composed of 1 PurL, 1 PurQ and 2 PurS subunits.

It localises to the cytoplasm. It carries out the reaction N(2)-formyl-N(1)-(5-phospho-beta-D-ribosyl)glycinamide + L-glutamine + ATP + H2O = 2-formamido-N(1)-(5-O-phospho-beta-D-ribosyl)acetamidine + L-glutamate + ADP + phosphate + H(+). It participates in purine metabolism; IMP biosynthesis via de novo pathway; 5-amino-1-(5-phospho-D-ribosyl)imidazole from N(2)-formyl-N(1)-(5-phospho-D-ribosyl)glycinamide: step 1/2. Functionally, part of the phosphoribosylformylglycinamidine synthase complex involved in the purines biosynthetic pathway. Catalyzes the ATP-dependent conversion of formylglycinamide ribonucleotide (FGAR) and glutamine to yield formylglycinamidine ribonucleotide (FGAM) and glutamate. The FGAM synthase complex is composed of three subunits. PurQ produces an ammonia molecule by converting glutamine to glutamate. PurL transfers the ammonia molecule to FGAR to form FGAM in an ATP-dependent manner. PurS interacts with PurQ and PurL and is thought to assist in the transfer of the ammonia molecule from PurQ to PurL. The protein is Phosphoribosylformylglycinamidine synthase subunit PurL of Corynebacterium glutamicum (strain ATCC 13032 / DSM 20300 / JCM 1318 / BCRC 11384 / CCUG 27702 / LMG 3730 / NBRC 12168 / NCIMB 10025 / NRRL B-2784 / 534).